A 201-amino-acid polypeptide reads, in one-letter code: Potassium-transporting ATPase KdpC subunit (201 aa).

A helical transmembrane segment spans residues 13-33; it reads IIFIIFTILCGGIYTIFITGI.

It belongs to the KdpC family. In terms of assembly, the system is composed of three essential subunits: KdpA, KdpB and KdpC.

It is found in the cell membrane. Its function is as follows. Part of the high-affinity ATP-driven potassium transport (or Kdp) system, which catalyzes the hydrolysis of ATP coupled with the electrogenic transport of potassium into the cytoplasm. This subunit acts as a catalytic chaperone that increases the ATP-binding affinity of the ATP-hydrolyzing subunit KdpB by the formation of a transient KdpB/KdpC/ATP ternary complex. The chain is Potassium-transporting ATPase KdpC subunit from Clostridium botulinum (strain Alaska E43 / Type E3).